The primary structure comprises 306 residues: Protein YIPF1 (306 aa).

The Cytoplasmic portion of the chain corresponds to 1–119 (MAAVDDLQFE…VRLYIRSNPD (119 aa)). The segment at 30-63 (IEDPSVSFGHQPRPPGSVGREEDEELLGNNDSDE) is disordered. Over residues 50–63 (EEDEELLGNNDSDE) the composition is skewed to acidic residues. Residues 120–140 (LYGPFWICATLVFAIAISGNL) form a helical membrane-spanning segment. Residues 141–162 (SNFLIHLGEKTYHYVPEFQKVS) are Lumenal-facing. The helical transmembrane segment at 163-183 (IAATVIYAYAWLVPLALWGFL) threads the bilayer. Residues 184-200 (LWRNSKVMSMVSYSFLE) lie on the Cytoplasmic side of the membrane. Residues 201 to 221 (IVCVYGYSLFIYIPTAVLWII) traverse the membrane as a helical segment. Residues 222 to 227 (PQRVVR) lie on the Lumenal side of the membrane. Residues 228–248 (WVLVMIALGVSGSVLVMTFWP) form a helical membrane-spanning segment. Residues 249 to 256 (AVREDNRR) lie on the Cytoplasmic side of the membrane. Residues 257–277 (VALATIVTIVLLHVLLSVGCL) traverse the membrane as a helical segment. Residues 278-306 (AYFFDAPEMDHLPAAITTPNQTVTAAKSS) are Lumenal-facing. N297 is a glycosylation site (N-linked (GlcNAc...) asparagine).

Belongs to the YIP1 family. As to quaternary structure, interacts with YIPF6; this interaction may stabilize YIPF1. May also form a ternary complex with YIPF2 and YIPF6.

The protein resides in the golgi apparatus. It localises to the cis-Golgi network membrane. Its subcellular location is the trans-Golgi network membrane. The protein localises to the late endosome membrane. This Mus musculus (Mouse) protein is Protein YIPF1 (Yipf1).